Reading from the N-terminus, the 141-residue chain is ATP synthase epsilon chain (141 aa).

The protein belongs to the ATPase epsilon chain family. F-type ATPases have 2 components, CF(1) - the catalytic core - and CF(0) - the membrane proton channel. CF(1) has five subunits: alpha(3), beta(3), gamma(1), delta(1), epsilon(1). CF(0) has three main subunits: a, b and c.

It localises to the cell membrane. Produces ATP from ADP in the presence of a proton gradient across the membrane. This is ATP synthase epsilon chain from Lactococcus lactis subsp. cremoris (strain MG1363).